Here is a 73-residue protein sequence, read N- to C-terminus: Disintegrin lachesin (73 aa).

Residues 1–73 (EAGEECDCGA…ADCPRNGYYG (73 aa)) form the Disintegrin domain. Cystine bridges form between Cys6-Cys21, Cys8-Cys16, Cys15-Cys38, Cys29-Cys35, Cys34-Cys59, and Cys47-Cys66. The Cell attachment site signature appears at 51 to 53 (RGD). Residues 51–73 (RGDNPDDRCTGQSADCPRNGYYG) form a disordered region.

It belongs to the venom metalloproteinase (M12B) family. P-II subfamily. P-IIa sub-subfamily. As to quaternary structure, monomer (disintegrin). In terms of tissue distribution, expressed by the venom gland.

It is found in the secreted. Its function is as follows. Inhibits fibrinogen interaction with platelets. Acts by binding to alpha-IIb/beta-3 (ITGA2B/ITGB3) on the platelet surface and inhibits aggregation induced by ADP, thrombin, platelet-activating factor and collagen. This Lachesis muta muta (Bushmaster) protein is Disintegrin lachesin.